Consider the following 484-residue polypeptide: Probable cobyric acid synthase (484 aa).

Residues 247 to 433 enclose the GATase cobBQ-type domain; sequence ELHIQIVKLP…LHGIFHNFAF (187 aa). Cys325 functions as the Nucleophile in the catalytic mechanism. His425 is an active-site residue.

This sequence belongs to the CobB/CobQ family. CobQ subfamily.

It functions in the pathway cofactor biosynthesis; adenosylcobalamin biosynthesis. Catalyzes amidations at positions B, D, E, and G on adenosylcobyrinic A,C-diamide. NH(2) groups are provided by glutamine, and one molecule of ATP is hydrogenolyzed for each amidation. The sequence is that of Probable cobyric acid synthase from Thermococcus onnurineus (strain NA1).